An 89-amino-acid polypeptide reads, in one-letter code: Large ribosomal subunit protein bL27 (89 aa).

Positions 1 to 22 (MAHKKAGGSSRNGRDSESKRLG) are disordered.

This sequence belongs to the bacterial ribosomal protein bL27 family.

This chain is Large ribosomal subunit protein bL27, found in Brucella abortus (strain S19).